The sequence spans 412 residues: Multifunctional CCA protein (412 aa).

ATP-binding residues include Gly-8 and Arg-11. Residues Gly-8 and Arg-11 each coordinate CTP. Asp-21 and Asp-23 together coordinate Mg(2+). Arg-91, Arg-137, and Arg-140 together coordinate ATP. The CTP site is built by Arg-91, Arg-137, and Arg-140. An HD domain is found at 226 to 327; the sequence is TGEHVLMVVE…VKVLERCDAL (102 aa).

It belongs to the tRNA nucleotidyltransferase/poly(A) polymerase family. Bacterial CCA-adding enzyme type 1 subfamily. Monomer. Can also form homodimers and oligomers. Mg(2+) is required as a cofactor. Ni(2+) serves as cofactor.

It carries out the reaction a tRNA precursor + 2 CTP + ATP = a tRNA with a 3' CCA end + 3 diphosphate. It catalyses the reaction a tRNA with a 3' CCA end + 2 CTP + ATP = a tRNA with a 3' CCACCA end + 3 diphosphate. In terms of biological role, catalyzes the addition and repair of the essential 3'-terminal CCA sequence in tRNAs without using a nucleic acid template. Adds these three nucleotides in the order of C, C, and A to the tRNA nucleotide-73, using CTP and ATP as substrates and producing inorganic pyrophosphate. tRNA 3'-terminal CCA addition is required both for tRNA processing and repair. Also involved in tRNA surveillance by mediating tandem CCA addition to generate a CCACCA at the 3' terminus of unstable tRNAs. While stable tRNAs receive only 3'-terminal CCA, unstable tRNAs are marked with CCACCA and rapidly degraded. The protein is Multifunctional CCA protein of Azoarcus sp. (strain BH72).